The sequence spans 21 residues: Protein YmjD (21 aa).

This Escherichia coli (strain K12) protein is Protein YmjD (ymjD).